A 422-amino-acid chain; its full sequence is Ornithine decarboxylase (422 aa).

Lys71 carries the post-translational modification N6-(pyridoxal phosphate)lysine. Residues Ser203, Gly240, and 275 to 278 each bind pyridoxal 5'-phosphate; that span reads EPGR. 331–332 contacts substrate; the sequence is FD. Catalysis depends on Cys359, which acts as the Proton donor; shared with dimeric partner. Residue Asp360 coordinates substrate. Tyr388 serves as a coordination point for pyridoxal 5'-phosphate.

Belongs to the Orn/Lys/Arg decarboxylase class-II family. In terms of assembly, homodimer. Only the dimer is catalytically active, as the active sites are constructed of residues from both monomers. Pyridoxal 5'-phosphate is required as a cofactor.

It catalyses the reaction L-ornithine + H(+) = putrescine + CO2. The protein operates within amine and polyamine biosynthesis; putrescine biosynthesis via L-ornithine pathway; putrescine from L-ornithine: step 1/1. With respect to regulation, inhibited by antizyme (AZ) in response to polyamine levels. AZ inhibits the assembly of the functional homodimer by binding to ODC monomers and targeting them for ubiquitin-independent proteolytic destruction by the 26S proteasome. Catalyzes the first and rate-limiting step of polyamine biosynthesis that converts ornithine into putrescine, which is the precursor for the polyamines, spermidine and spermine. Polyamines are essential for cell proliferation and are implicated in cellular processes, ranging from DNA replication to apoptosis. In Caenorhabditis elegans, this protein is Ornithine decarboxylase.